The chain runs to 737 residues: Phosphoribosylformylglycinamidine synthase subunit PurL (737 aa).

The active site involves His50. ATP is bound by residues Tyr53 and Lys92. Mg(2+) is bound at residue Glu94. Substrate contacts are provided by residues 95-98 (SHNH) and Arg117. His96 serves as the catalytic Proton acceptor. Mg(2+) is bound at residue Asp118. A substrate-binding site is contributed by Gln241. Residue Asp269 participates in Mg(2+) binding. 313–315 (ESQ) lines the substrate pocket. Residues Asp495 and Gly532 each contribute to the ATP site. A Mg(2+)-binding site is contributed by Asn533. Ser535 is a binding site for substrate.

The protein belongs to the FGAMS family. As to quaternary structure, monomer. Part of the FGAM synthase complex composed of 1 PurL, 1 PurQ and 2 PurS subunits.

It localises to the cytoplasm. The catalysed reaction is N(2)-formyl-N(1)-(5-phospho-beta-D-ribosyl)glycinamide + L-glutamine + ATP + H2O = 2-formamido-N(1)-(5-O-phospho-beta-D-ribosyl)acetamidine + L-glutamate + ADP + phosphate + H(+). It functions in the pathway purine metabolism; IMP biosynthesis via de novo pathway; 5-amino-1-(5-phospho-D-ribosyl)imidazole from N(2)-formyl-N(1)-(5-phospho-D-ribosyl)glycinamide: step 1/2. In terms of biological role, part of the phosphoribosylformylglycinamidine synthase complex involved in the purines biosynthetic pathway. Catalyzes the ATP-dependent conversion of formylglycinamide ribonucleotide (FGAR) and glutamine to yield formylglycinamidine ribonucleotide (FGAM) and glutamate. The FGAM synthase complex is composed of three subunits. PurQ produces an ammonia molecule by converting glutamine to glutamate. PurL transfers the ammonia molecule to FGAR to form FGAM in an ATP-dependent manner. PurS interacts with PurQ and PurL and is thought to assist in the transfer of the ammonia molecule from PurQ to PurL. This Bartonella bacilliformis (strain ATCC 35685 / KC583 / Herrer 020/F12,63) protein is Phosphoribosylformylglycinamidine synthase subunit PurL.